A 29-amino-acid chain; its full sequence is Phospholemman-like protein (29 aa).

The protein belongs to the FXYD family. Phosphorylated by protein kinase C.

It is found in the membrane. Induces a hyperpolarization-activated chloride current when expressed in Xenopus oocytes. The sequence is that of Phospholemman-like protein from Scyliorhinus canicula (Small-spotted catshark).